A 253-amino-acid chain; its full sequence is Sulfate transporter CysZ (253 aa).

The next 4 helical transmembrane spans lie at 31 to 51 (FVIL…WWLF), 75 to 95 (LLWP…FSTI), 151 to 171 (IVLL…PVLW), and 222 to 242 (IPLL…AMWV).

It belongs to the CysZ family.

The protein localises to the cell inner membrane. High affinity, high specificity proton-dependent sulfate transporter, which mediates sulfate uptake. Provides the sulfur source for the cysteine synthesis pathway. This chain is Sulfate transporter CysZ, found in Escherichia coli O81 (strain ED1a).